Here is a 334-residue protein sequence, read N- to C-terminus: D-alanine--D-alanine ligase (334 aa).

Residues 124–329 (KMWFSALGIP…FAQYLSGNIL (206 aa)) enclose the ATP-grasp domain. 154–209 (ALAKWGSIFIKAASQGSSVGCYRVDSIEQLASSLEEAFTFSPYVVIEKTITARELE) provides a ligand contact to ATP. Residues D283, E296, and N298 each contribute to the Mg(2+) site.

The protein belongs to the D-alanine--D-alanine ligase family. The cofactor is Mg(2+). It depends on Mn(2+) as a cofactor.

Its subcellular location is the cytoplasm. The catalysed reaction is 2 D-alanine + ATP = D-alanyl-D-alanine + ADP + phosphate + H(+). The protein operates within cell wall biogenesis; peptidoglycan biosynthesis. Its function is as follows. Cell wall formation. The sequence is that of D-alanine--D-alanine ligase from Shewanella pealeana (strain ATCC 700345 / ANG-SQ1).